Here is a 330-residue protein sequence, read N- to C-terminus: Glycerol-3-phosphate dehydrogenase [NAD(P)+] (330 aa).

The NADPH site is built by Ser14, Phe15, Arg35, and Lys109. Positions 109 and 137 each coordinate sn-glycerol 3-phosphate. Ala141 provides a ligand contact to NADPH. Lys192, Asp248, Ser258, Arg259, and Asn260 together coordinate sn-glycerol 3-phosphate. Lys192 functions as the Proton acceptor in the catalytic mechanism. Arg259 serves as a coordination point for NADPH. NADPH-binding residues include Leu283 and Glu285.

This sequence belongs to the NAD-dependent glycerol-3-phosphate dehydrogenase family.

It localises to the cytoplasm. It catalyses the reaction sn-glycerol 3-phosphate + NAD(+) = dihydroxyacetone phosphate + NADH + H(+). The catalysed reaction is sn-glycerol 3-phosphate + NADP(+) = dihydroxyacetone phosphate + NADPH + H(+). It functions in the pathway membrane lipid metabolism; glycerophospholipid metabolism. Catalyzes the reduction of the glycolytic intermediate dihydroxyacetone phosphate (DHAP) to sn-glycerol 3-phosphate (G3P), the key precursor for phospholipid synthesis. This chain is Glycerol-3-phosphate dehydrogenase [NAD(P)+], found in Rickettsia massiliae (strain Mtu5).